The following is a 283-amino-acid chain: Release factor glutamine methyltransferase (283 aa).

Residues 121–125, Asp-144, and Asn-188 each bind S-adenosyl-L-methionine; that span reads GTGSG. Residue 188 to 191 coordinates substrate; it reads NPPY.

The protein belongs to the protein N5-glutamine methyltransferase family. PrmC subfamily.

It catalyses the reaction L-glutaminyl-[peptide chain release factor] + S-adenosyl-L-methionine = N(5)-methyl-L-glutaminyl-[peptide chain release factor] + S-adenosyl-L-homocysteine + H(+). Methylates the class 1 translation termination release factors RF1/PrfA and RF2/PrfB on the glutamine residue of the universally conserved GGQ motif. The chain is Release factor glutamine methyltransferase from Bacillus anthracis.